A 190-amino-acid polypeptide reads, in one-letter code: Probable nicotinate-nucleotide adenylyltransferase (190 aa).

Belongs to the NadD family.

It carries out the reaction nicotinate beta-D-ribonucleotide + ATP + H(+) = deamido-NAD(+) + diphosphate. It functions in the pathway cofactor biosynthesis; NAD(+) biosynthesis; deamido-NAD(+) from nicotinate D-ribonucleotide: step 1/1. Catalyzes the reversible adenylation of nicotinate mononucleotide (NaMN) to nicotinic acid adenine dinucleotide (NaAD). The protein is Probable nicotinate-nucleotide adenylyltransferase of Borrelia hermsii (strain HS1 / DAH).